Reading from the N-terminus, the 197-residue chain is Inner membrane protein p54 (197 aa).

A helical transmembrane segment spans residues 32–52 (YTILIAIVVLVIIIIVLIYLF). The interval 84–123 (PQPGTSKPAGATTASVGKPVTGRPATNRPVTDRPATNNPV) is disordered. 4 repeat units span residues 139–142 (AAAS), 143–146 (AAAS), 147–150 (AAAS), and 151–154 (AAAS). The interval 139–154 (AAASAAASAAASAAAS) is 4 X 4 AA tandem repeats of A-A-A-S. Positions 163–175 (YTTVTTQNTASQT) are interaction with host DYNLL1.

This sequence belongs to the asfivirus envelope protein p54 family. As to quaternary structure, interacts with the host light chain cytoplasmic dynein DYNLL1; this interaction is critical for intracellular microtubule-dependent virus transport toward viral factories.

It localises to the virion membrane. The protein localises to the host cytoplasm. It is found in the host cytoskeleton. The protein resides in the host endoplasmic reticulum membrane. Its function is as follows. Inner envelope protein involved, through its interaction with host dynein, in the intracellular microtubule-dependent transport of viral capsid toward viral factories. Seems to induce caspase-3 activation and apoptosis. Plays a role in virion morphogenesis by recruiting and transforming the host ER membranes into the precursors of the viral envelope. Involved in virus attachment to the host cell. The chain is Inner membrane protein p54 from African swine fever virus (isolate Tick/South Africa/Pretoriuskop Pr4/1996) (ASFV).